We begin with the raw amino-acid sequence, 383 residues long: PqqA peptide cyclase (383 aa).

The region spanning 11-226 (PGPPLWLLAE…TNQWREKLAA (216 aa)) is the Radical SAM core domain. [4Fe-4S] cluster contacts are provided by Cys25, Cys29, and Cys32.

It belongs to the radical SAM superfamily. PqqE family. In terms of assembly, interacts with PqqD. The interaction is necessary for activity of PqqE. [4Fe-4S] cluster serves as cofactor.

It carries out the reaction [PQQ precursor protein] + S-adenosyl-L-methionine = E-Y cross-linked-[PQQ precursor protein] + 5'-deoxyadenosine + L-methionine + H(+). It functions in the pathway cofactor biosynthesis; pyrroloquinoline quinone biosynthesis. Functionally, catalyzes the cross-linking of a glutamate residue and a tyrosine residue in the PqqA protein as part of the biosynthesis of pyrroloquinoline quinone (PQQ). In Azotobacter vinelandii (strain DJ / ATCC BAA-1303), this protein is PqqA peptide cyclase.